The primary structure comprises 191 residues: 3-isopropylmalate dehydratase small subunit (191 aa).

The protein belongs to the LeuD family. LeuD type 1 subfamily. Heterodimer of LeuC and LeuD.

It catalyses the reaction (2R,3S)-3-isopropylmalate = (2S)-2-isopropylmalate. The protein operates within amino-acid biosynthesis; L-leucine biosynthesis; L-leucine from 3-methyl-2-oxobutanoate: step 2/4. Functionally, catalyzes the isomerization between 2-isopropylmalate and 3-isopropylmalate, via the formation of 2-isopropylmaleate. The polypeptide is 3-isopropylmalate dehydratase small subunit (Anaeromyxobacter sp. (strain K)).